A 137-amino-acid chain; its full sequence is Large ribosomal subunit protein uL16 (137 aa).

Residues 1–16 show a composition bias toward basic residues; that stretch reads MLQPKRTKFRKMQKGR. The segment at 1–22 is disordered; the sequence is MLQPKRTKFRKMQKGRIRGEAK.

It belongs to the universal ribosomal protein uL16 family. Part of the 50S ribosomal subunit.

Functionally, binds 23S rRNA and is also seen to make contacts with the A and possibly P site tRNAs. This Jannaschia sp. (strain CCS1) protein is Large ribosomal subunit protein uL16.